The primary structure comprises 376 residues: Ribonucleoside-diphosphate reductase subunit beta (376 aa).

Fe cation-binding residues include Asp-85, Glu-116, and His-119. Tyr-123 is an active-site residue. Fe cation is bound by residues Glu-205, Glu-239, and His-242.

This sequence belongs to the ribonucleoside diphosphate reductase small chain family. As to quaternary structure, tetramer of two alpha and two beta subunits. Fe cation is required as a cofactor.

It catalyses the reaction a 2'-deoxyribonucleoside 5'-diphosphate + [thioredoxin]-disulfide + H2O = a ribonucleoside 5'-diphosphate + [thioredoxin]-dithiol. In terms of biological role, provides the precursors necessary for DNA synthesis. Catalyzes the biosynthesis of deoxyribonucleotides from the corresponding ribonucleotides. The sequence is that of Ribonucleoside-diphosphate reductase subunit beta (nrdB) from Buchnera aphidicola subsp. Schizaphis graminum (strain Sg).